The primary structure comprises 701 residues: Elongation factor G (701 aa).

A tr-type G domain is found at 8–291 (SRYRNIGIVA…AVIDFLPAPT (284 aa)). GTP-binding positions include 17–24 (AHVDAGKT), 89–93 (DTPGH), and 143–146 (NKMD).

It belongs to the TRAFAC class translation factor GTPase superfamily. Classic translation factor GTPase family. EF-G/EF-2 subfamily.

The protein resides in the cytoplasm. Its function is as follows. Catalyzes the GTP-dependent ribosomal translocation step during translation elongation. During this step, the ribosome changes from the pre-translocational (PRE) to the post-translocational (POST) state as the newly formed A-site-bound peptidyl-tRNA and P-site-bound deacylated tRNA move to the P and E sites, respectively. Catalyzes the coordinated movement of the two tRNA molecules, the mRNA and conformational changes in the ribosome. In Pseudomonas fluorescens (strain Pf0-1), this protein is Elongation factor G.